A 56-amino-acid chain; its full sequence is MKKRYKVTALFEDGTSQCLVVGNFSSPTNAWCAAMRNLTPEGIARVQHYNVEEISK.

This chain is Putative gene 59 protein (59), found in Bacillus phage SP01 (Bacteriophage SP01).